The chain runs to 365 residues: Aminomethyltransferase (365 aa).

This sequence belongs to the GcvT family. In terms of assembly, the glycine cleavage system is composed of four proteins: P, T, L and H.

The enzyme catalyses N(6)-[(R)-S(8)-aminomethyldihydrolipoyl]-L-lysyl-[protein] + (6S)-5,6,7,8-tetrahydrofolate = N(6)-[(R)-dihydrolipoyl]-L-lysyl-[protein] + (6R)-5,10-methylene-5,6,7,8-tetrahydrofolate + NH4(+). Its function is as follows. The glycine cleavage system catalyzes the degradation of glycine. The sequence is that of Aminomethyltransferase from Chlorobaculum tepidum (strain ATCC 49652 / DSM 12025 / NBRC 103806 / TLS) (Chlorobium tepidum).